A 382-amino-acid chain; its full sequence is MHISVILFCALWSAVSAENSDDYELMYVNLDNEIDNGLHPTEDPTPCDCSRENSEWDKLFTMLENSQMREGMLLQATDVMLRGELQKLQAELGRLEGSLQKLCGPEAPSETRLARALDDLLQASRDAGRRLARLEDAGALRPQEEAGRALGAVLEELRRTRADLRAVQGWAASRWLPAGCETAILFPMRSKKIFASVHPVTPMKLETFSACIWVKATEVLNKTVLFSYGTKRNPYEIQLYLSYRSIMLVVGGEENRLVADAVISLGTWTHLCSTWDSKKGHMALWVNGDSVATAVDMATGHVVPEGGILQIGQEKNGCCVGGGFDETLAFSGRLTGFNIWEGVLSNEEIREAGGAESCHIRGNVVGWGVTEIQPHGGAQYVY.

Residues 1–17 (MHISVILFCALWSAVSA) form the signal peptide. A coiled-coil region spans residues 79-137 (VMLRGELQKLQAELGRLEGSLQKLCGPEAPSETRLARALDDLLQASRDAGRRLARLEDA). 2 disulfide bridges follow: C180–C358 and C211–C272. The Pentraxin (PTX) domain maps to 180–382 (CETAILFPMR…QPHGGAQYVY (203 aa)). N-linked (GlcNAc...) asparagine glycosylation is present at N221.

As to quaternary structure, homooctamer; disulfide-linked. Binds to C1q.

It localises to the secreted. In terms of biological role, plays a role in the regulation of innate resistance to pathogens, inflammatory reactions, possibly clearance of self-components and female fertility. In Bos taurus (Bovine), this protein is Pentraxin-related protein PTX3 (PTX3).